A 342-amino-acid chain; its full sequence is Non-homologous end-joining protein 1 (342 aa).

The next 2 membrane-spanning stretches (helical) occupy residues 27-47 and 129-149; these read LLLF…LVSL and MFYM…NLST. The interaction with LIF1 stretch occupies residues 173-342; the sequence is LRDLDGGSKV…RKFGKVRIKN (170 aa). The interval 270–342 is disordered; the sequence is ADPTNEARPN…RKFGKVRIKN (73 aa). Basic and acidic residues predominate over residues 286–296; that stretch reads PKTDFKPKSRE. The segment covering 297–312 has biased composition (polar residues); sequence SSTSSQLRLENFSESE. Over residues 331-342 the composition is skewed to basic residues; the sequence is KKRKFGKVRIKN.

It belongs to the XRCC4-XLF family. XLF subfamily. As to quaternary structure, interacts (via C-terminus) with LIF1 (via N-terminus); the interaction is direct. Interacts with DNL4.

The protein resides in the cytoplasm. It localises to the nucleus membrane. In terms of biological role, involved in non-homologous end joining (NHEJ). Facilitates the transport of LIF1 into the nucleus, where it can interact with DNA ligase DNL4 to repair double-strand breaks (DSB). Mediates mating-type regulation of NHEJ. Prevents chromosome circularisation by NHEJ in absence of telomerase. In Saccharomyces cerevisiae (strain ATCC 204508 / S288c) (Baker's yeast), this protein is Non-homologous end-joining protein 1 (NEJ1).